The sequence spans 316 residues: Pantothenate kinase (316 aa).

Position 95 to 102 (95 to 102) interacts with ATP; the sequence is GSVAVGKS.

This sequence belongs to the prokaryotic pantothenate kinase family.

It is found in the cytoplasm. It catalyses the reaction (R)-pantothenate + ATP = (R)-4'-phosphopantothenate + ADP + H(+). Its pathway is cofactor biosynthesis; coenzyme A biosynthesis; CoA from (R)-pantothenate: step 1/5. The chain is Pantothenate kinase from Shewanella sp. (strain ANA-3).